A 625-amino-acid chain; its full sequence is tRNA uridine 5-carboxymethylaminomethyl modification enzyme MnmG (625 aa).

FAD is bound by residues 13 to 18 (GGGHAG), Val125, and Ser182. An NAD(+)-binding site is contributed by 276–290 (GPRYCPSIEDKITRF). Residue Gln373 coordinates FAD.

It belongs to the MnmG family. As to quaternary structure, homodimer. Heterotetramer of two MnmE and two MnmG subunits. Requires FAD as cofactor.

It is found in the cytoplasm. NAD-binding protein involved in the addition of a carboxymethylaminomethyl (cmnm) group at the wobble position (U34) of certain tRNAs, forming tRNA-cmnm(5)s(2)U34. This Lactococcus lactis subsp. lactis (strain IL1403) (Streptococcus lactis) protein is tRNA uridine 5-carboxymethylaminomethyl modification enzyme MnmG.